The chain runs to 422 residues: Signal recognition particle receptor FtsY (422 aa).

The disordered stretch occupies residues 39–86 (PERGVVDRSGGYTASSGITFSQTPTTQPAERIDTSGLPAVGDDATVPR). Positions 50–66 (YTASSGITFSQTPTTQP) are enriched in polar residues. GTP is bound by residues 230-237 (GVNGTGKT), 312-316 (DTAGR), and 374-377 (TKLD).

This sequence belongs to the GTP-binding SRP family. FtsY subfamily. In terms of assembly, part of the signal recognition particle protein translocation system, which is composed of SRP and FtsY.

It localises to the cell membrane. It is found in the cytoplasm. The enzyme catalyses GTP + H2O = GDP + phosphate + H(+). In terms of biological role, involved in targeting and insertion of nascent membrane proteins into the cytoplasmic membrane. Acts as a receptor for the complex formed by the signal recognition particle (SRP) and the ribosome-nascent chain (RNC). This is Signal recognition particle receptor FtsY from Mycobacterium bovis (strain ATCC BAA-935 / AF2122/97).